The primary structure comprises 1054 residues: MGIGEDQMQGSSGREEKIFVSVRLRPLNVRERARNDVADWECINDETVIYRSHLSISERSMYPTAYTFDRVFGPECSTREVYDQGAKEVALSVVSGVHASVFAYGQTSSGKTYTMIGITDYALADIYDYIEKHNEREFILKFSAMEIYNESVRDLLSTDISPLRVLDDPEKGTVVEKLTEETLRDWNHFKELLSICIAQRQIGETALNEVSSRSHQILRLTVESTAREYLAKDKFSTLTATVNFIDLAGSERASQSLSAGTRLKEGGHINRSLLTLGTVIRKLSKGKNGHIPFRDSKLTRILQTSLGGNARTSIICTLSPARVHVEQSRNTLLFASCAKEVTTNAQVNVVMSDKALVRHLQRELAKLESELSSPRQALVVSDTTALLKEKDLQIEKLNKEVFQLAQELERAYSRIEDLQQIIGEAPQQEILSTDSEQTNTNVVLGRQYPKLRVRSSWESLNITPESPLSAQASIMISPQSTEHGSDENVFQLSDLRLNSGASSPAQHLAFVTPGKFTKVRLNIRGVESKNQLHIHKGESVDQSRVQGERLHEMDEPSEVDSEDTCTELQCIETESPGIIMYPEPNILPDRCKAVSALPLCEPESKNSRPPTETAEEKEEKEETEEKEEEEEERVKEVSSVSIQTKEKSGPIKVSPRCVLSLTDESFPDESSNLKRDPTHQDFVTPSPEKLYAWHLESNGQTAGGTGFTRSRSCGASFVSSSSFSLSERDANTPPCWYQNERAESNLKPSNSKRPPLPKHISRMSMPATWFEKDFNHTQRMPAGLDGVNMIKSSPNGSQVSTSKSHVYARQTSGRALISQDEGEETVPQRDKRIIHLSMEEIEQKFLALRSSKSFKDAAVDPIQDYLTMPLNWPLEFKRLEMEIIELWHACNVSLSHRSYFFLLFRGDQKDCLYMEVELRRLKYIRETFTHNNKAIENGRTLTSMSSLRALNRERYKLSQLMQKKLTKEERENVFLRWGIGLNTKHRRLQLAHRLWSESKDMDHVRESASVVGKLMGFVDMDLASKEMFGLNFSLRPRAKKSSLWKRSVLSLSIL.

Residues 17 to 341 (KIFVSVRLRP…LLFASCAKEV (325 aa)) form the Kinesin motor domain. 105 to 112 (GQTSSGKT) is a binding site for ATP. 2 coiled-coil regions span residues 350–425 (VMSD…IGEA) and 611–640 (TETA…VSSV). Disordered regions lie at residues 600 to 648 (CEPE…KEKS) and 740 to 760 (ERAE…PKHI). Residues 613–631 (TAEEKEEKEETEEKEEEEE) are compositionally biased toward acidic residues.

This sequence belongs to the TRAFAC class myosin-kinesin ATPase superfamily. Kinesin family. KIN-7 subfamily.

The polypeptide is Kinesin-like protein KIN-7G (Arabidopsis thaliana (Mouse-ear cress)).